A 410-amino-acid polypeptide reads, in one-letter code: 2-oxoisovalerate dehydrogenase subunit alpha (410 aa).

It belongs to the BCKDHA family. As to quaternary structure, heterodimer of an alpha and a beta chain. Thiamine diphosphate serves as cofactor.

The catalysed reaction is N(6)-[(R)-lipoyl]-L-lysyl-[protein] + 3-methyl-2-oxobutanoate + H(+) = N(6)-[(R)-S(8)-2-methylpropanoyldihydrolipoyl]-L-lysyl-[protein] + CO2. Functionally, the branched-chain alpha-keto dehydrogenase complex catalyzes the overall conversion of alpha-keto acids to acyl-CoA and CO(2). It contains multiple copies of three enzymatic components: branched-chain alpha-keto acid decarboxylase (E1), lipoamide acyltransferase (E2) and lipoamide dehydrogenase (E3). This Pseudomonas putida (Arthrobacter siderocapsulatus) protein is 2-oxoisovalerate dehydrogenase subunit alpha (bkdA1).